The following is a 190-amino-acid chain: Shikimate kinase (190 aa).

14–19 serves as a coordination point for ATP; that stretch reads GSGKST. Mg(2+) is bound at residue Ser-18. Residues Asp-36, Arg-60, and Gly-82 each coordinate substrate. ATP is bound at residue Arg-120. Residue Arg-147 participates in substrate binding.

This sequence belongs to the shikimate kinase family. Monomer. Mg(2+) serves as cofactor.

The protein resides in the cytoplasm. It carries out the reaction shikimate + ATP = 3-phosphoshikimate + ADP + H(+). It functions in the pathway metabolic intermediate biosynthesis; chorismate biosynthesis; chorismate from D-erythrose 4-phosphate and phosphoenolpyruvate: step 5/7. Its function is as follows. Catalyzes the specific phosphorylation of the 3-hydroxyl group of shikimic acid using ATP as a cosubstrate. In Chlorobium phaeobacteroides (strain DSM 266 / SMG 266 / 2430), this protein is Shikimate kinase.